Here is a 199-residue protein sequence, read N- to C-terminus: Recombination protein RecR (199 aa).

A C4-type zinc finger spans residues 57–72; it reads CSICGNITDKDPCYVC. Residues 80-176 enclose the Toprim domain; the sequence is TIVCVVQDSR…RVTRIAHGLP (97 aa).

This sequence belongs to the RecR family.

In terms of biological role, may play a role in DNA repair. It seems to be involved in an RecBC-independent recombinational process of DNA repair. It may act with RecF and RecO. The protein is Recombination protein RecR of Exiguobacterium sibiricum (strain DSM 17290 / CCUG 55495 / CIP 109462 / JCM 13490 / 255-15).